The sequence spans 251 residues: Chlorophyll a-b binding protein 4, chloroplastic (251 aa).

Serine 35 carries the post-translational modification Phosphoserine. Tryptophan 57 is a chlorophyll b binding site. 2 residues coordinate chlorophyll a: phenylalanine 77 and glutamate 96. Arginine 101 contributes to the chlorophyll b binding site. A run of 2 helical transmembrane segments spans residues 102-122 (WAML…IGII) and 135-155 (YFAS…YVEI). The chlorophyll b site is built by serine 138, valine 144, glutamate 154, and arginine 157. Positions 204, 205, 208, 210, 222, and 237 each coordinate chlorophyll a.

The protein belongs to the light-harvesting chlorophyll a/b-binding (LHC) protein family. The LHC complex consists of chlorophyll a-b binding proteins. Red-emitting heterodimer with LHCA1. Binds at least 14 chlorophylls (8 Chl-a and 6 Chl-b) and carotenoids such as lutein and neoxanthin. is required as a cofactor. Photoregulated by reversible phosphorylation of its threonine residues.

It is found in the plastid. It localises to the chloroplast thylakoid membrane. The light-harvesting complex (LHC) functions as a light receptor, it captures and delivers excitation energy to photosystems with which it is closely associated. The sequence is that of Chlorophyll a-b binding protein 4, chloroplastic from Arabidopsis thaliana (Mouse-ear cress).